The primary structure comprises 180 residues: UPF0340 protein BLi03936/BL03990 (180 aa).

It belongs to the UPF0340 family.

This chain is UPF0340 protein BLi03936/BL03990, found in Bacillus licheniformis (strain ATCC 14580 / DSM 13 / JCM 2505 / CCUG 7422 / NBRC 12200 / NCIMB 9375 / NCTC 10341 / NRRL NRS-1264 / Gibson 46).